Here is a 391-residue protein sequence, read N- to C-terminus: GTPase Obg (391 aa).

The 159-residue stretch at 1-159 folds into the Obg domain; sequence MKFIDEALIR…RDLLLELMLL (159 aa). Residues 160-333 enclose the OBG-type G domain; the sequence is ADVGMLGLPN…LTRDIMDFIE (174 aa). Residues 166 to 173, 191 to 195, 213 to 216, 283 to 286, and 314 to 316 contribute to the GTP site; these read GLPNAGKS, FTTLV, DIPG, NKID, and SAA. Mg(2+) contacts are provided by Ser-173 and Thr-193.

Belongs to the TRAFAC class OBG-HflX-like GTPase superfamily. OBG GTPase family. As to quaternary structure, monomer. Mg(2+) is required as a cofactor.

The protein localises to the cytoplasm. Functionally, an essential GTPase which binds GTP, GDP and possibly (p)ppGpp with moderate affinity, with high nucleotide exchange rates and a fairly low GTP hydrolysis rate. Plays a role in control of the cell cycle, stress response, ribosome biogenesis and in those bacteria that undergo differentiation, in morphogenesis control. In Actinobacillus pleuropneumoniae serotype 5b (strain L20), this protein is GTPase Obg.